Here is an 885-residue protein sequence, read N- to C-terminus: Rho GTPase-activating protein gacFF (885 aa).

Low complexity predominate over residues 168-182 (TTTNNSNNSNSNNNN). The disordered stretch occupies residues 168–187 (TTTNNSNNSNSNNNNKQYNS). Positions 222 to 249 (LINKIQNDSEQLKLVLSQVEQQIEFLKS) form a coiled coil. In terms of domain architecture, F-box spans 348-394 (SDIFSLLPTHLTLYVFSYLEPKELLILAQVSSQWQKLAGDNLLWVRF). The 108-residue stretch at 464–571 (SSSKEGWLYK…WMILLNSIIK (108 aa)) folds into the PH domain. Composition is skewed to low complexity over residues 594-622 (NNVY…NNNN) and 629-648 (LPPL…SSTG). Residues 594–680 (NNVYINNNNN…GGGSGGNNNF (87 aa)) are disordered. Residues 701–885 (VALSKILENQ…KYYDEIFIKK (185 aa)) enclose the Rho-GAP domain.

It is found in the cytoplasm. Its function is as follows. Rho GTPase-activating protein involved in the signal transduction pathway. The sequence is that of Rho GTPase-activating protein gacFF (gacFF) from Dictyostelium discoideum (Social amoeba).